We begin with the raw amino-acid sequence, 292 residues long: L-serine dehydratase, alpha chain (292 aa).

It belongs to the iron-sulfur dependent L-serine dehydratase family. Heterooctamer of four alpha chains and four beta chains. [4Fe-4S] cluster serves as cofactor.

The enzyme catalyses L-serine = pyruvate + NH4(+). Its pathway is carbohydrate biosynthesis; gluconeogenesis. The sequence is that of L-serine dehydratase, alpha chain (sdhA) from Peptoniphilus asaccharolyticus (Peptostreptococcus asaccharolyticus).